The following is a 348-amino-acid chain: F(420)H(2) dehydrogenase subunit H (348 aa).

Helical transmembrane passes span 20-40, 93-113, 127-147, 172-192, 198-218, 259-279, 286-306, and 328-348; these read GVVGLVLVGAIFLGAMGAVWL, IFMMSSVFLMLVAIPVGAVFI, ISVLYIEAMSAITIFGIFMIA, PLGITVVSVAIMTGSLNIVEI, LLWNIFLQPIGFIVFFIALMA, ILGSFLVALLFLGGWNVPAFV, GLIAPTGFFLLKTVLVLMTII, and LLPLSLLNLVWAVGLGLYLGA.

Belongs to the complex I subunit 1 family. As to quaternary structure, the FPO complex is composed of at least 13 different subunits. FpoA, FpoH, FpoJ, FpoK, FpoL, FpoM and FpoN proteins constitute the membrane sector of the complex.

The protein resides in the cell membrane. The enzyme catalyses methanophenazine + reduced coenzyme F420-(gamma-L-Glu)(n) = dihydromethanophenazine + oxidized coenzyme F420-(gamma-L-Glu)(n) + H(+). Component of the F(420)H(2) dehydrogenase (FPO complex) which is part of the energy-conserving F(420)H(2):heterodisulfide oxidoreductase system. The membrane-bound electron transfer system of the complex plays an important role in the metabolism of methylotrophic methanogens when the organisms grow on methanol or methylamines. Catalyzes the oxidation of methanophenazine to dihydromethanophenazine. It shuttles electrons from F(420)H(2), via FAD and iron-sulfur (Fe-S) centers, to methanophenazine (an electron carrier in the membrane). It couples the redox reaction to proton translocation (for every two electrons transferred, two hydrogen ions are translocated across the cytoplasmic membrane), and thus conserves the redox energy in a proton gradient. This chain is F(420)H(2) dehydrogenase subunit H, found in Methanosarcina acetivorans (strain ATCC 35395 / DSM 2834 / JCM 12185 / C2A).